The primary structure comprises 219 residues: MOB kinase activator-like 1 (219 aa).

Zn(2+)-binding residues include C79, C84, H161, and H166.

It belongs to the MOB1/phocein family. In terms of assembly, interacts with and activates trc and wts. Phosphorylated by wts/mats kinase complex. Activated by phosphorylation by Hippo (Hpo) kinase which increases its affinity and its ability to activate Warts (Wts) kinase. Ubiquitously expressed at low levels in developing tissues (at protein level).

The protein resides in the cytoplasm. It is found in the cytoskeleton. The protein localises to the microtubule organizing center. It localises to the centrosome. Its subcellular location is the nucleus. The protein resides in the cytosol. It is found in the cell membrane. Its function is as follows. Coactivator of Warts (Wts) kinase in the Hippo/SWH (Sav/Wts/Hpo)signaling pathway, a signaling pathway that plays a pivotal role in organ size control and tumor suppression by restricting proliferation and promoting apoptosis. The core of this pathway is composed of a kinase cascade wherein Hippo (Hpo), in complex with its regulatory protein Salvador (Sav), phosphorylates and activates Warts (Wts) in complex with its regulatory protein Mats, which in turn phosphorylates and inactivates the Yorkie (Yki)oncoprotein. The Hippo/SWH signaling pathway inhibits the activity of the transcriptional complex formed by Scalloped (sd) and Yki and the target genes of this pathway include cyclin-E (cycE), diap1 and bantam. Mats is essential for early development and is required for proper chromosomal segregation in developing embryos. The protein is MOB kinase activator-like 1 of Drosophila melanogaster (Fruit fly).